The sequence spans 230 residues: Cytochrome c oxidase subunit 2 (230 aa).

Residues 1–14 are Mitochondrial intermembrane-facing; that stretch reads MAHPSQLGFQDAAS. The chain crosses the membrane as a helical span at residues 15-45; the sequence is PVMEELLHFHDHTLMIVFLISTLVLYIIMAM. Over 46–59 the chain is Mitochondrial matrix; the sequence is VSTKLTNKYILDSQ. A helical transmembrane segment spans residues 60–87; the sequence is EIEIVWTILPAVILIMIALPSLRILYLM. Residues 88–230 lie on the Mitochondrial intermembrane side of the membrane; the sequence is DEINDPHLTI…SWSSLMLEEA (143 aa). Cu cation-binding residues include H161, C196, E198, C200, H204, and M207. E198 provides a ligand contact to Mg(2+).

It belongs to the cytochrome c oxidase subunit 2 family. As to quaternary structure, component of the cytochrome c oxidase (complex IV, CIV), a multisubunit enzyme composed of 14 subunits. The complex is composed of a catalytic core of 3 subunits MT-CO1, MT-CO2 and MT-CO3, encoded in the mitochondrial DNA, and 11 supernumerary subunits COX4I, COX5A, COX5B, COX6A, COX6B, COX6C, COX7A, COX7B, COX7C, COX8 and NDUFA4, which are encoded in the nuclear genome. The complex exists as a monomer or a dimer and forms supercomplexes (SCs) in the inner mitochondrial membrane with NADH-ubiquinone oxidoreductase (complex I, CI) and ubiquinol-cytochrome c oxidoreductase (cytochrome b-c1 complex, complex III, CIII), resulting in different assemblies (supercomplex SCI(1)III(2)IV(1) and megacomplex MCI(2)III(2)IV(2)). Found in a complex with TMEM177, COA6, COX18, COX20, SCO1 and SCO2. Interacts with TMEM177 in a COX20-dependent manner. Interacts with COX20. Interacts with COX16. It depends on Cu cation as a cofactor.

It is found in the mitochondrion inner membrane. It catalyses the reaction 4 Fe(II)-[cytochrome c] + O2 + 8 H(+)(in) = 4 Fe(III)-[cytochrome c] + 2 H2O + 4 H(+)(out). Its function is as follows. Component of the cytochrome c oxidase, the last enzyme in the mitochondrial electron transport chain which drives oxidative phosphorylation. The respiratory chain contains 3 multisubunit complexes succinate dehydrogenase (complex II, CII), ubiquinol-cytochrome c oxidoreductase (cytochrome b-c1 complex, complex III, CIII) and cytochrome c oxidase (complex IV, CIV), that cooperate to transfer electrons derived from NADH and succinate to molecular oxygen, creating an electrochemical gradient over the inner membrane that drives transmembrane transport and the ATP synthase. Cytochrome c oxidase is the component of the respiratory chain that catalyzes the reduction of oxygen to water. Electrons originating from reduced cytochrome c in the intermembrane space (IMS) are transferred via the dinuclear copper A center (CU(A)) of subunit 2 and heme A of subunit 1 to the active site in subunit 1, a binuclear center (BNC) formed by heme A3 and copper B (CU(B)). The BNC reduces molecular oxygen to 2 water molecules using 4 electrons from cytochrome c in the IMS and 4 protons from the mitochondrial matrix. This chain is Cytochrome c oxidase subunit 2 (MT-CO2), found in Squalus acanthias (Spiny dogfish).